Here is a 337-residue protein sequence, read N- to C-terminus: Carbonic anhydrase 14 (337 aa).

The first 15 residues, 1–15 (MLFSALLLEVIWILA), serve as a signal peptide directing secretion. Topologically, residues 16–290 (ADGGQHWTYE…AGSSYTTGEM (275 aa)) are extracellular. Residues 20 to 278 (QHWTYEGPHG…LNQRMVFASF (259 aa)) enclose the Alpha-carbonic anhydrase domain. C40 and C221 are disulfide-bonded. The Proton donor/acceptor role is filled by H84. The Zn(2+) site is built by H109, H111, and H135. N213 carries N-linked (GlcNAc...) asparagine glycosylation. 217 to 218 (TT) lines the substrate pocket. A helical transmembrane segment spans residues 291–311 (LSLGVGILVGCLCLLLAVYFI). At 312 to 337 (ARKIRKKRLENRKSVVFTSAQATTEA) the chain is on the cytoplasmic side. Phosphoserine is present on S325.

The protein belongs to the alpha-carbonic anhydrase family. It depends on Zn(2+) as a cofactor. As to expression, high expression in all parts of the central nervous system and lower expression in adult liver, heart, small intestine, colon, kidney, urinary bladder and skeletal muscle.

It localises to the membrane. The catalysed reaction is hydrogencarbonate + H(+) = CO2 + H2O. Activated by histamine, L-adrenaline, L- and D-histidine, and L- and D-phenylalanine. Inhibited by coumarins, saccharin, sulfonamide derivatives such as acetazolamide (AZA) and Foscarnet (phosphonoformate trisodium salt). Its function is as follows. Reversible hydration of carbon dioxide. This is Carbonic anhydrase 14 (CA14) from Homo sapiens (Human).